The sequence spans 842 residues: Transient receptor potential cation channel subfamily V member 1 (842 aa).

The segment at 1-64 is disordered; the sequence is MKRWVSLDSG…DSEETSPMDC (64 aa). The Cytoplasmic portion of the chain corresponds to 1 to 435; the sequence is MKRWVSLDSG…QDKWDRVVKR (435 aa). The span at 10-21 shows a compositional bias: acidic residues; that stretch reads GESEDPLPEDTC. An ANK 1 repeat occupies 113 to 141; that stretch reads KLYDRRRIFEAVAQNNCQELESLLCFLQR. Arg-118 contacts ATP. Phosphothreonine; by PKA; in vitro is present on Thr-147. An ANK 2 repeat occupies 156 to 188; it reads TGKTCLLKAMLNLHSGQNDTIPLLLEIARQTDS. ATP contacts are provided by residues Lys-158, Lys-163, Asn-167, 202–205, and 213–214; these read YKGQ and ER. ANK repeat units follow at residues 206–231, 252–279, 288–324, and 338–361; these read TALHIAIERRNMALVTLLVENGADVQ, ELPLSLAACTNQLAIVKFLLQNSWQPAD, NTVLHALVEVADNTPDNTKFVTSMYNEILILGAKLHP, and TPLALAAGSGKIGVLAYILQREIL. A Phosphothreonine; by PKA; in vitro modification is found at Thr-373. The stretch at 396 to 418 is one ANK 7 repeat; it reads NSVLEVIAYSSSETPNRHDMLLV. Residues 436–457 traverse the membrane as a helical segment; sequence IFYFNFFVYCLYMIIFTTAAYY. The Extracellular portion of the chain corresponds to 458–475; that stretch reads RPVDGLPPYKLRNLPGDY. A helical membrane pass occupies residues 476 to 500; sequence FRVTGEILSVAGGVYFFFRGIQYFL. Residues 501–513 lie on the Cytoplasmic side of the membrane; the sequence is QRRPSMKALFVDS. Ser-505 bears the Phosphoserine; by PKC/PRKCE mark. 514–515 lines the resiniferatoxin pocket; the sequence is YS. Residues 514–535 traverse the membrane as a helical segment; sequence YSEMLFFVQALFMLATVVLYFS. The Extracellular segment spans residues 536 to 538; sequence HCK. The chain crosses the membrane as a helical span at residues 539 to 559; it reads EYVATMVFSLALGWINMLYYT. Arg-560 provides a ligand contact to resiniferatoxin. Residues 560-562 lie on the Cytoplasmic side of the membrane; that stretch reads RGF. The chain crosses the membrane as a helical span at residues 563–601; the sequence is QQMGIYAVMIEKMILRDLCRFMFVYLVFLFGFSTAVVTL. Topologically, residues 602 to 633 are extracellular; that stretch reads IEDGKNSSTSAESTSHRWRGFGCRSSDSSYNS. The N-linked (GlcNAc...) asparagine glycan is linked to Asn-607. Residues 634 to 655 constitute an intramembrane region (pore-forming); the sequence is LYSTCLELFKFTIGMGDLEFTE. Residue Gly-647 participates in Na(+) binding. The Selectivity filter signature appears at 647–650; that stretch reads GMGD. Residue Asp-650 coordinates Ca(2+). Residues 656–659 lie on the Extracellular side of the membrane; the sequence is NYDF. A helical transmembrane segment spans residues 660-686; it reads KAVFIILLLAYVILTYILLLNMLIALM. Residues 687 to 842 are Cytoplasmic-facing; the sequence is GETVNKIAQE…FKDSVAAAEK (156 aa). An AD region spans residues 688-716; that stretch reads ETVNKIAQESKSIWKLQRAITILDTEKGF. The residue at position 708 (Thr-708) is a Phosphothreonine. The tract at residues 771-805 is interaction with calmodulin; the sequence is EGVKRTLSFSLRSGRVSGRNWKNFALVPLLRDAST. The residue at position 778 (Ser-778) is a Phosphoserine. The required for PIP2-mediated channel inhibition stretch occupies residues 781–796; sequence LRSGRVSGRNWKNFAL. Ser-804 carries the phosphoserine; by PKC/PRKCE and PKC/PRKCZ modification. Phosphoserine is present on Ser-824.

This sequence belongs to the transient receptor (TC 1.A.4) family. TrpV subfamily. TRPV1 sub-subfamily. In terms of assembly, homotetramer. Interacts with PIRT. May also form a heteromeric channel with TRPV3. Interacts with CALM, PRKCM and CSK. Interacts with PRKCG and NTRK1, probably by forming a trimeric complex. Interacts with the Scolopendra mutilans RhTx toxin. Interacts with TMEM100. Interacts with PACS2. Phosphorylation by PKA reverses capsaicin-induced dephosphorylation at multiple sites. Phosphorylation by CAMKII seems to regulate binding to vanilloids. Phosphorylated and modulated by PRKCE, PRKCM and probably PRKCZ. Dephosphorylation by calcineurin seems to lead to receptor desensitization and phosphorylation by CAMKII recovers activity.

It is found in the postsynaptic cell membrane. The protein resides in the cell projection. The protein localises to the dendritic spine membrane. It localises to the cell membrane. The catalysed reaction is Ca(2+)(in) = Ca(2+)(out). The enzyme catalyses Mg(2+)(in) = Mg(2+)(out). It carries out the reaction Na(+)(in) = Na(+)(out). It catalyses the reaction K(+)(in) = K(+)(out). With respect to regulation, the channel is sensitized by ATP binding. Repeated stimulation with capsaicin gives rise to progressively smaller responses, due to desensitization. This desensitization is triggered by the influx of calcium ions and is inhibited by elevated ATP levels. Ca(2+) and CALM displace ATP from its binding site and trigger a conformation change that leads to a closed, desensitized channel. The double-knot toxin (DkTx) from the Chinese earth tiger tarantula activates the channel and traps it in an open conformation. The Scolopendra mutilans RhTx toxin potentiates the heat activation pathway mediated by this channel by binding to the charge-rich outer pore region (in an activated state). Channel activity is activated via the interaction with PIRT and phosphatidylinositol 4,5-bisphosphate (PIP2). Both PIRT and PIP2 are required to activate channel activity. Intracellular PIP2 inhibits desensitization. Functionally, non-selective calcium permeant cation channel involved in detection of noxious chemical and thermal stimuli. Seems to mediate proton influx and may be involved in intracellular acidosis in nociceptive neurons. Involved in mediation of inflammatory pain and hyperalgesia. Sensitized by a phosphatidylinositol second messenger system activated by receptor tyrosine kinases, which involves PKC isozymes and PCL. Activation by vanilloids, like capsaicin, and temperatures higher than 42 degrees Celsius. Upon activation, exhibits a time- and Ca(2+)-dependent outward rectification, followed by a long-lasting refractory state. Mild extracellular acidic pH (6.5) potentiates channel activation by noxious heat and vanilloids, whereas acidic conditions (pH &lt;6) directly activate the channel. Can be activated by endogenous compounds, including 12-hydroperoxytetraenoic acid and bradykinin. Acts as ionotropic endocannabinoid receptor with central neuromodulatory effects. Triggers a form of long-term depression (TRPV1-LTD) mediated by the endocannabinoid anandamine in the hippocampus and nucleus accumbens by affecting AMPA receptors endocytosis. This Oryctolagus cuniculus (Rabbit) protein is Transient receptor potential cation channel subfamily V member 1 (Trpv1).